The following is a 624-amino-acid chain: Serine/threonine-protein kinase ppk35 (624 aa).

The Protein kinase domain occupies 162–465 (FDLLVKLGQG…TIEIQKHPFF (304 aa)). ATP is bound by residues 168-176 (LGQGGYGSV) and Lys-191. Asp-285 functions as the Proton acceptor in the catalytic mechanism. The region spanning 466-548 (KRLHWNGLRK…KYRPNARKPL (83 aa)) is the AGC-kinase C-terminal domain. A compositionally biased stretch (basic residues) spans 545 to 559 (RKPLVGRHREKRQLR). Residues 545–617 (RKPLVGRHRE…VHRLLERKGK (73 aa)) are disordered. Residues 560 to 574 (KEKPEKKNNSTKQKD) are compositionally biased toward basic and acidic residues. The segment covering 596–609 (SKTKGHKTKSSRVH) has biased composition (basic residues).

It belongs to the protein kinase superfamily. Ser/Thr protein kinase family.

It localises to the cytoplasm. Its subcellular location is the nucleus. The protein resides in the nucleolus. It carries out the reaction L-seryl-[protein] + ATP = O-phospho-L-seryl-[protein] + ADP + H(+). The enzyme catalyses L-threonyl-[protein] + ATP = O-phospho-L-threonyl-[protein] + ADP + H(+). Functionally, has a role in meiosis. The chain is Serine/threonine-protein kinase ppk35 (ppk35) from Schizosaccharomyces pombe (strain 972 / ATCC 24843) (Fission yeast).